The primary structure comprises 495 residues: Cysteine--tRNA ligase (495 aa).

Zn(2+) is bound at residue Cys-29. The short motif at 31–41 is the 'HIGH' region element; sequence PTVYDYGHIGN. Zn(2+)-binding residues include Cys-211, His-236, and Glu-240. The 'KMSKS' region motif lies at 268–272; sequence KMSKS. Lys-271 contacts ATP.

It belongs to the class-I aminoacyl-tRNA synthetase family. In terms of assembly, monomer. Zn(2+) serves as cofactor.

The protein resides in the cytoplasm. It carries out the reaction tRNA(Cys) + L-cysteine + ATP = L-cysteinyl-tRNA(Cys) + AMP + diphosphate. This chain is Cysteine--tRNA ligase, found in Koribacter versatilis (strain Ellin345).